The primary structure comprises 311 residues: tRNA dimethylallyltransferase (311 aa).

Residue 10-17 (GPTAVGKT) participates in ATP binding. 12 to 17 (TAVGKT) contributes to the substrate binding site. An interaction with substrate tRNA region spans residues 35–38 (DSMQ).

The protein belongs to the IPP transferase family. In terms of assembly, monomer. Mg(2+) is required as a cofactor.

It carries out the reaction adenosine(37) in tRNA + dimethylallyl diphosphate = N(6)-dimethylallyladenosine(37) in tRNA + diphosphate. Its function is as follows. Catalyzes the transfer of a dimethylallyl group onto the adenine at position 37 in tRNAs that read codons beginning with uridine, leading to the formation of N6-(dimethylallyl)adenosine (i(6)A). The protein is tRNA dimethylallyltransferase of Anoxybacillus flavithermus (strain DSM 21510 / WK1).